We begin with the raw amino-acid sequence, 376 residues long: Phytanoyl-CoA hydroxylase-interacting protein-like (376 aa).

Positions 52–161 constitute a Fibronectin type-III domain; that stretch reads VPHNIKISNI…EIIEFCTADY (110 aa).

It belongs to the PHYHIP family.

Its function is as follows. May play a role in the development of the central system. The polypeptide is Phytanoyl-CoA hydroxylase-interacting protein-like (phyhipl) (Xenopus tropicalis (Western clawed frog)).